We begin with the raw amino-acid sequence, 883 residues long: UTP--glucose-1-phosphate uridylyltransferase 3, chloroplastic (883 aa).

The N-terminal 72 residues, 1–72 (MANPQASPIL…HQVRHVSTVP (72 aa)), are a transit peptide targeting the chloroplast.

The protein belongs to the UDPGP type 1 family. Mg(2+) serves as cofactor.

The protein localises to the plastid. It is found in the chloroplast. The catalysed reaction is alpha-D-glucose 1-phosphate + UTP + H(+) = UDP-alpha-D-glucose + diphosphate. Inhibited by pyrophosphate. Involved in the biosynthesis of sulfolipids in the chloroplast. Catalyzes the first committed step in sulfolipid biosynthesis. Converts glucose 1-phosphate to UDP-glucose, the precursor of the polar head of sulfolipid. In addition to glucose 1-phosphate, can use galactose 1-phosphate, but with much lower activity. No uridyltransferase activity with other hexose monophosphates. Specific for UTP and cannot use ATP, CTP, and GTP. In Arabidopsis thaliana (Mouse-ear cress), this protein is UTP--glucose-1-phosphate uridylyltransferase 3, chloroplastic.